Consider the following 95-residue polypeptide: Co-chaperonin GroES (95 aa).

The protein belongs to the GroES chaperonin family. As to quaternary structure, heptamer of 7 subunits arranged in a ring. Interacts with the chaperonin GroEL.

The protein resides in the cytoplasm. Together with the chaperonin GroEL, plays an essential role in assisting protein folding. The GroEL-GroES system forms a nano-cage that allows encapsulation of the non-native substrate proteins and provides a physical environment optimized to promote and accelerate protein folding. GroES binds to the apical surface of the GroEL ring, thereby capping the opening of the GroEL channel. In Bordetella bronchiseptica (strain ATCC BAA-588 / NCTC 13252 / RB50) (Alcaligenes bronchisepticus), this protein is Co-chaperonin GroES.